We begin with the raw amino-acid sequence, 172 residues long: MVDKRESYTKEDLLASGRGELFGAKGPQLPAPNMLMMDRVIKMSETGGNYDKGYVEAELDINPDLWFFGCHFIGDPVMPGCLGLDAMWQLVGFYLGWLGGEGKGRALGVGEVKFTGQVLPTAKKVTYRIHFKRIVNRRLIMGLADGEVLVDDRLIYTANDLKVGLFQDTSAF.

His-71 is a catalytic residue.

This sequence belongs to the thioester dehydratase family. FabA subfamily. In terms of assembly, homodimer.

The protein resides in the cytoplasm. It carries out the reaction a (3R)-hydroxyacyl-[ACP] = a (2E)-enoyl-[ACP] + H2O. The catalysed reaction is (3R)-hydroxydecanoyl-[ACP] = (2E)-decenoyl-[ACP] + H2O. The enzyme catalyses (2E)-decenoyl-[ACP] = (3Z)-decenoyl-[ACP]. Its pathway is lipid metabolism; fatty acid biosynthesis. Necessary for the introduction of cis unsaturation into fatty acids. Catalyzes the dehydration of (3R)-3-hydroxydecanoyl-ACP to E-(2)-decenoyl-ACP and then its isomerization to Z-(3)-decenoyl-ACP. Can catalyze the dehydratase reaction for beta-hydroxyacyl-ACPs with saturated chain lengths up to 16:0, being most active on intermediate chain length. This is 3-hydroxydecanoyl-[acyl-carrier-protein] dehydratase from Klebsiella pneumoniae (strain 342).